A 328-amino-acid polypeptide reads, in one-letter code: Solute-binding protein Bamb_6123 (328 aa).

A signal peptide spans 1 to 26; sequence MTHRFPRSRTALAVALMAGFAMSAQA. Residues His-35, Glu-73, Arg-89, Arg-149, Asn-209, and Glu-236 each coordinate beta-D-galacturonate. His-35, Glu-73, Arg-89, Arg-149, Asn-209, and Glu-236 together coordinate beta-D-glucuronate.

Belongs to the bacterial solute-binding protein 7 family. The complex is comprised of an extracytoplasmic solute-binding protein and a heteromeric permease formed by two transmembrane proteins.

It is found in the periplasm. In terms of biological role, solute-binding protein that binds D-galacturonate and D-glucuronate (in vitro). Probably part of a tripartite ATP-independent periplasmic (TRAP) transport system that mediates solute transport into the cytoplasm. The sequence is that of Solute-binding protein Bamb_6123 from Burkholderia ambifaria (strain ATCC BAA-244 / DSM 16087 / CCUG 44356 / LMG 19182 / AMMD) (Burkholderia cepacia (strain AMMD)).